A 418-amino-acid polypeptide reads, in one-letter code: Putative ion-transport protein YfeO (418 aa).

The next 12 membrane-spanning stretches (helical) occupy residues 10-30 (LLLS…LIVV), 54-74 (DSPL…GLVI), 99-119 (ALPG…SLGP), 120-140 (EHPI…RLLP), 149-169 (ILAS…AALI), 186-206 (LFAP…FFHP), 223-243 (ILSG…AVWC), 258-278 (VLVL…GGPV), 300-320 (DYFL…ASGF), 322-342 (GGRI…LHEH), 343-363 (VPAV…VLVV), and 371-391 (LFMA…CIVM).

Belongs to the chloride channel (TC 2.A.49) family.

The protein localises to the cell membrane. The protein is Putative ion-transport protein YfeO of Shigella boydii serotype 4 (strain Sb227).